The primary structure comprises 219 residues: Chloramphenicol acetyltransferase (219 aa).

The active-site Proton acceptor is H190.

The protein belongs to the chloramphenicol acetyltransferase family. As to quaternary structure, homotrimer.

It carries out the reaction chloramphenicol + acetyl-CoA = chloramphenicol 3-acetate + CoA. Its function is as follows. This enzyme is an effector of chloramphenicol resistance in bacteria. The sequence is that of Chloramphenicol acetyltransferase (catB) from Clostridium butyricum.